Here is an 88-residue protein sequence, read N- to C-terminus: Small ribosomal subunit protein bS20 (88 aa).

A compositionally biased stretch (basic and acidic residues) spans 1–23 (MPNTKSAEKALRVADANRQENRR). Disordered regions lie at residues 1-28 (MPNT…KSQV) and 69-88 (PKNA…QAAK). The span at 71–81 (NAARRKSRLMK) shows a compositional bias: basic residues.

It belongs to the bacterial ribosomal protein bS20 family.

Its function is as follows. Binds directly to 16S ribosomal RNA. The protein is Small ribosomal subunit protein bS20 of Dehalococcoides mccartyi (strain ATCC BAA-2266 / KCTC 15142 / 195) (Dehalococcoides ethenogenes (strain 195)).